The chain runs to 398 residues: Acetate kinase (398 aa).

Asn8 is a binding site for Mg(2+). Lys15 contributes to the ATP binding site. Position 89 (Arg89) interacts with substrate. Asp146 acts as the Proton donor/acceptor in catalysis. ATP is bound by residues 206–210 (HIGNG), 283–285 (DMR), and 331–335 (GMGEN). Glu383 provides a ligand contact to Mg(2+).

This sequence belongs to the acetokinase family. As to quaternary structure, homodimer. It depends on Mg(2+) as a cofactor. The cofactor is Mn(2+).

It localises to the cytoplasm. The catalysed reaction is acetate + ATP = acetyl phosphate + ADP. It functions in the pathway metabolic intermediate biosynthesis; acetyl-CoA biosynthesis; acetyl-CoA from acetate: step 1/2. Catalyzes the formation of acetyl phosphate from acetate and ATP. Can also catalyze the reverse reaction. The sequence is that of Acetate kinase from Streptococcus pyogenes serotype M6 (strain ATCC BAA-946 / MGAS10394).